A 301-amino-acid polypeptide reads, in one-letter code: MAARLRDYWDLTKPKVVALIVFTALVGMFLAIPGIPSVVQIQSGALGFLGIWLAAAAAAAINQLLDAKIDAQMARTSWRPLVVGKVRPVQVLVFAGVLITLSMTILTLGVNLITAVLTFTSLIGYAVIYTVYLKRMTSQNIVIGGLAGAMPPMLGWAAVTGLSTAADWINASLLVAIIFVWTPPHFWALAIFRRADYAKASIPMLPVTHGVQHTSRQILLYTVILSVVTLLPVATGMSGVFYLGAALVLDAVFLWYAWRLLDPPDELFAMKTFGYSIVYLMALFAFLMFDHWLRLADFYWN.

A run of 9 helical transmembrane segments spans residues 16–36 (VVAL…PGIP), 41–61 (IQSG…AAAI), 93–113 (VFAG…VNLI), 114–134 (TAVL…VYLK), 141–161 (IVIG…AVTG), 172–192 (SLLV…LAIF), 217–237 (QILL…ATGM), 238–258 (SGVF…WYAW), and 273–293 (FGYS…DHWL).

The protein belongs to the UbiA prenyltransferase family. Protoheme IX farnesyltransferase subfamily.

It localises to the cell inner membrane. The catalysed reaction is heme b + (2E,6E)-farnesyl diphosphate + H2O = Fe(II)-heme o + diphosphate. The protein operates within porphyrin-containing compound metabolism; heme O biosynthesis; heme O from protoheme: step 1/1. Its function is as follows. Converts heme B (protoheme IX) to heme O by substitution of the vinyl group on carbon 2 of heme B porphyrin ring with a hydroxyethyl farnesyl side group. The sequence is that of Protoheme IX farnesyltransferase from Xylella fastidiosa (strain 9a5c).